The following is a 301-amino-acid chain: Methionyl-tRNA formyltransferase (301 aa).

109–112 (SILP) is a (6S)-5,6,7,8-tetrahydrofolate binding site.

The protein belongs to the Fmt family.

The catalysed reaction is L-methionyl-tRNA(fMet) + (6R)-10-formyltetrahydrofolate = N-formyl-L-methionyl-tRNA(fMet) + (6S)-5,6,7,8-tetrahydrofolate + H(+). Attaches a formyl group to the free amino group of methionyl-tRNA(fMet). The formyl group appears to play a dual role in the initiator identity of N-formylmethionyl-tRNA by promoting its recognition by IF2 and preventing the misappropriation of this tRNA by the elongation apparatus. The polypeptide is Methionyl-tRNA formyltransferase (Campylobacter curvus (strain 525.92)).